A 285-amino-acid polypeptide reads, in one-letter code: Acetylglutamate kinase (285 aa).

Substrate contacts are provided by residues 64–65, R86, and N180; that span reads GG.

This sequence belongs to the acetylglutamate kinase family. ArgB subfamily.

Its subcellular location is the plastid. The protein resides in the chloroplast. It carries out the reaction N-acetyl-L-glutamate + ATP = N-acetyl-L-glutamyl 5-phosphate + ADP. The protein operates within amino-acid biosynthesis; L-arginine biosynthesis; N(2)-acetyl-L-ornithine from L-glutamate: step 2/4. Its function is as follows. Catalyzes the ATP-dependent phosphorylation of N-acetyl-L-glutamate. The chain is Acetylglutamate kinase from Gracilaria tenuistipitata var. liui (Red alga).